Reading from the N-terminus, the 247-residue chain is Uridylate kinase (247 aa).

Position 17–20 (17–20 (KFSG)) interacts with ATP. Gly-59 lines the UMP pocket. The ATP site is built by Gly-60 and Arg-64. Residues Asp-79 and 140–147 (TGNPFFTT) contribute to the UMP site. Positions 167, 173, and 176 each coordinate ATP.

The protein belongs to the UMP kinase family. In terms of assembly, homohexamer.

Its subcellular location is the cytoplasm. It catalyses the reaction UMP + ATP = UDP + ADP. Its pathway is pyrimidine metabolism; CTP biosynthesis via de novo pathway; UDP from UMP (UMPK route): step 1/1. With respect to regulation, inhibited by UTP. In terms of biological role, catalyzes the reversible phosphorylation of UMP to UDP. In Legionella pneumophila subsp. pneumophila (strain Philadelphia 1 / ATCC 33152 / DSM 7513), this protein is Uridylate kinase.